The primary structure comprises 166 residues: Photosystem I assembly protein Ycf3 (166 aa).

TPR repeat units follow at residues 35–68, 72–105, and 120–153; these read AFTY…EIDP, SYIL…NPSL, and GEQA…APTN.

It belongs to the Ycf3 family.

The protein resides in the plastid. The protein localises to the chloroplast thylakoid membrane. Functionally, essential for the assembly of the photosystem I (PSI) complex. May act as a chaperone-like factor to guide the assembly of the PSI subunits. This chain is Photosystem I assembly protein Ycf3, found in Oltmannsiellopsis viridis (Marine flagellate).